The chain runs to 969 residues: RNA polymerase-associated protein RapA (969 aa).

Positions 162–339 (EVGQRVAPRV…FARLALLDAD (178 aa)) constitute a Helicase ATP-binding domain. 175 to 182 (DEVGLGKT) lines the ATP pocket. The DEAH box motif lies at 285-288 (DEAH). Residues 492-663 (RIEWLITFLK…GFLKNPQAVG (172 aa)) form the Helicase C-terminal domain.

Belongs to the SNF2/RAD54 helicase family. RapA subfamily. In terms of assembly, interacts with the RNAP. Has a higher affinity for the core RNAP than for the holoenzyme. Its ATPase activity is stimulated by binding to RNAP.

Its function is as follows. Transcription regulator that activates transcription by stimulating RNA polymerase (RNAP) recycling in case of stress conditions such as supercoiled DNA or high salt concentrations. Probably acts by releasing the RNAP, when it is trapped or immobilized on tightly supercoiled DNA. Does not activate transcription on linear DNA. Probably not involved in DNA repair. In Actinobacillus pleuropneumoniae serotype 7 (strain AP76), this protein is RNA polymerase-associated protein RapA.